The primary structure comprises 473 residues: Sarcalumenin (473 aa).

The first 20 residues, 1 to 20 (MRALVLLGCLLASLLFSGQA), serve as a signal peptide directing secretion. The Dynamin-type G domain maps to 90-331 (ITSKPMVLFL…IENRLENKIA (242 aa)). The G1 motif stretch occupies residues 100-107 (GPWSVGKS). The G2 motif stretch occupies residues 128-129 (EP). The tract at residues 190–193 (DTPG) is G3 motif. The tract at residues 255 to 258 (NKAD) is G4 motif. Position 278 (Pro-278) is a region of interest, G5 motif. 2 N-linked (GlcNAc...) asparagine glycosylation sites follow: Asn-281 and Asn-389.

Belongs to the TRAFAC class dynamin-like GTPase superfamily. Dynamin/Fzo/YdjA family. Post-translationally, N-glycosylated.

It localises to the sarcoplasmic reticulum lumen. Its subcellular location is the sarcoplasmic reticulum membrane. The polypeptide is Sarcalumenin (SRL) (Homo sapiens (Human)).